We begin with the raw amino-acid sequence, 837 residues long: Tuftelin-interacting protein 11 (837 aa).

A compositionally biased stretch (basic and acidic residues) spans 1-13; it reads MSLSHLYRDGEGH. Disordered regions lie at residues 1–31, 54–73, and 85–133; these read MSLS…DWDL, WAER…RARD, and LKKG…KGFA. The segment at 1 to 50 is required for interaction with DHX15; that stretch reads MSLSHLYRDGEGHMDDDDDERENFEITDWDLQNEFNPNRQRHWQTKEEAT. Position 2 is a phosphoserine (serine 2). Residues 14-28 are compositionally biased toward acidic residues; the sequence is MDDDDDERENFEITD. Over residues 54 to 64 the composition is skewed to basic and acidic residues; it reads WAERDSDEERP. Residues serine 59 and serine 98 each carry the phosphoserine modification. Residues 91–102 show a composition bias toward acidic residues; that stretch reads EEAELEDSEDEE. Over residues 103-116 the composition is skewed to basic and acidic residues; the sequence is KPVKQDDFPKDFGP. Serine 144 bears the Phosphoserine mark. The G-patch domain occupies 149–195; it reads TKGIGQKLLQKMGYVPGRGLGKNAQGIINPIEAKQRKGKGAVGAYGS. Disordered stretches follow at residues 183-236 and 289-312; these read QRKG…KKKP and HNVP…EAKA. At serine 210 the chain carries Phosphoserine. A compositionally biased stretch (basic and acidic residues) spans 217–231; sequence EFQKELSQWRKDPSG. The short motif at 700–705 is the Nuclear localization signal element; the sequence is VKDKFN. Residues 710–734 are required for nuclear speckle localization; that stretch reads IMNRAVSSNVGAYMQPGARENIAYL.

It belongs to the TFP11/STIP family. In terms of assembly, identified in the spliceosome C complex. Found in the Intron Large (IL) complex, a post-mRNA release spliceosomal complex containing the excised intron, U2, U5 and U6 snRNPs, and splicing factors. Interacts with TUFT1. Interacts with DHX15; indicative for a recruitment of DHX15 to the IL complex. Interacts with GCFC2.

It localises to the cytoplasm. The protein resides in the nucleus. Its function is as follows. Involved in pre-mRNA splicing, specifically in spliceosome disassembly during late-stage splicing events. Intron turnover seems to proceed through reactions in two lariat-intron associated complexes termed Intron Large (IL) and Intron Small (IS). In cooperation with DHX15 seems to mediate the transition of the U2, U5 and U6 snRNP-containing IL complex to the snRNP-free IS complex leading to efficient debranching and turnover of excised introns. May play a role in the differentiation of ameloblasts and odontoblasts or in the forming of the enamel extracellular matrix. The protein is Tuftelin-interacting protein 11 (TFIP11) of Canis lupus familiaris (Dog).